The sequence spans 311 residues: Triacylglycerol lipase (311 aa).

Residues 1 to 26 (MKKKSLLPLGLAIGLASLAASPLIQA) form the signal peptide. The AB hydrolase-1 domain occupies 35–280 (PIVLAHGMLG…DNYRMNHLDE (246 aa)). Methionine 42 contacts substrate. Serine 108 acts as the Nucleophile in catalysis. A substrate-binding site is contributed by histidine 109. A disulfide bridge links cysteine 209 with cysteine 261. Aspartate 235 is a Ca(2+) binding site. Catalysis depends on charge relay system residues aspartate 255 and histidine 277. Residues aspartate 279, glutamine 283, and leucine 287 each contribute to the Ca(2+) site.

This sequence belongs to the AB hydrolase superfamily. Pseudomonas lipase family. Monomer. The cofactor is Ca(2+).

It is found in the secreted. It carries out the reaction a triacylglycerol + H2O = a diacylglycerol + a fatty acid + H(+). Catalyzes the hydrolysis of triacylglycerol. Also able to catalyze, in anhydrous organic solvents, intramolecular transesterification of omega-hydroxyfatty acid esters to form macrocyclic lactones. This biosynthesis is dependent on the chain length of the substrates, and the formation of monomer lactone is maximum with methyl 18-hydroxyoctadecanoate. With shorter substrates, monomer lactone decreases and the formation of diolide (dimer lactone) increases. The sequence is that of Triacylglycerol lipase from Pseudomonas sp. (strain 109).